Here is a 245-residue protein sequence, read N- to C-terminus: 4-hydroxy-tetrahydrodipicolinate reductase (245 aa).

NAD(+) is bound by residues 8–13, 78–80, and 102–105; these read GSTGKM, GTT, and SANM. Histidine 134 functions as the Proton donor/acceptor in the catalytic mechanism. Histidine 135 contacts (S)-2,3,4,5-tetrahydrodipicolinate. Lysine 138 serves as the catalytic Proton donor. 144–145 contributes to the (S)-2,3,4,5-tetrahydrodipicolinate binding site; that stretch reads GT.

This sequence belongs to the DapB family.

It is found in the cytoplasm. The catalysed reaction is (S)-2,3,4,5-tetrahydrodipicolinate + NAD(+) + H2O = (2S,4S)-4-hydroxy-2,3,4,5-tetrahydrodipicolinate + NADH + H(+). It catalyses the reaction (S)-2,3,4,5-tetrahydrodipicolinate + NADP(+) + H2O = (2S,4S)-4-hydroxy-2,3,4,5-tetrahydrodipicolinate + NADPH + H(+). It participates in amino-acid biosynthesis; L-lysine biosynthesis via DAP pathway; (S)-tetrahydrodipicolinate from L-aspartate: step 4/4. In terms of biological role, catalyzes the conversion of 4-hydroxy-tetrahydrodipicolinate (HTPA) to tetrahydrodipicolinate. This is 4-hydroxy-tetrahydrodipicolinate reductase from Rickettsia akari (strain Hartford).